Reading from the N-terminus, the 167-residue chain is Ribosome maturation factor RimM (167 aa).

A PRC barrel domain is found at 94–165 (EHEYYYSDII…TIKITPMEGL (72 aa)).

This sequence belongs to the RimM family. Binds ribosomal protein uS19.

It localises to the cytoplasm. An accessory protein needed during the final step in the assembly of 30S ribosomal subunit, possibly for assembly of the head region. Essential for efficient processing of 16S rRNA. May be needed both before and after RbfA during the maturation of 16S rRNA. It has affinity for free ribosomal 30S subunits but not for 70S ribosomes. This chain is Ribosome maturation factor RimM, found in Staphylococcus epidermidis (strain ATCC 35984 / DSM 28319 / BCRC 17069 / CCUG 31568 / BM 3577 / RP62A).